Consider the following 184-residue polypeptide: Nutrient stress-induced DNA-binding protein (184 aa).

It belongs to the Dps family. In terms of assembly, hexamer.

Its function is as follows. Involved in protection of chromosomal DNA from damage under nutrient-limited and oxidative stress conditions. Binds heme. The protein is Nutrient stress-induced DNA-binding protein (dpsA) of Nostoc sp. (strain PCC 7120 / SAG 25.82 / UTEX 2576).